The chain runs to 342 residues: Methionine import ATP-binding protein MetN 3 (342 aa).

The ABC transporter domain occupies 2–241; that stretch reads ISLKGISKTF…PKEQMTKEFV (240 aa). 38–45 contacts ATP; sequence GYSGAGKS.

This sequence belongs to the ABC transporter superfamily. Methionine importer (TC 3.A.1.24) family. As to quaternary structure, the complex is composed of two ATP-binding proteins (MetN), two transmembrane proteins (MetI) and a solute-binding protein (MetQ).

It localises to the cell membrane. The catalysed reaction is L-methionine(out) + ATP + H2O = L-methionine(in) + ADP + phosphate + H(+). It catalyses the reaction D-methionine(out) + ATP + H2O = D-methionine(in) + ADP + phosphate + H(+). Functionally, part of the ABC transporter complex MetNIQ involved in methionine import. Responsible for energy coupling to the transport system. This Shouchella clausii (strain KSM-K16) (Alkalihalobacillus clausii) protein is Methionine import ATP-binding protein MetN 3.